Reading from the N-terminus, the 94-residue chain is Defensin alpha 5 (94 aa).

Positions 1–19 (MRTIAILAAILLVALQAQA) are cleaved as a signal peptide. 3 disulfide bridges follow: cysteine 65–cysteine 93, cysteine 67–cysteine 82, and cysteine 72–cysteine 92.

This sequence belongs to the alpha-defensin family. Homodimer. Homotetramer. Interacts with B.antracis lef/lethal factor. Glycosylated. In terms of processing, proteolytically cleaved at Arg-62 by trypsin. Both the propeptide form proHD5/HD5(20-94) and HD5(56-94) are cleaved into the lumenal peptide form HD5(63-94) by trypsin. Unprocessed proHD5 exerts antimicrobial activities, but peptide potency is enhanced by peptide processing. Proteolytically cleaved in duodenal fluid; derived fragments are antimicrobially active against commensal bacteria (in vitro).

The protein resides in the secreted. It localises to the cytoplasmic vesicle. It is found in the secretory vesicle. Its function is as follows. Host-defense peptide that maintains sterility in the urogenital system. Has antimicrobial activity against a wide range of bacteria, including Gram-negative E.coli, P.aeruginosa and S.typhimurium, and Gram-positive E.aerogenes, S.aureus, B.cereus, E.faecium and L.monocytogenes. Confers resistance to intestinal infection by S.typhimurium. Exhibits antimicrobial activity against enteric commensal bacteria such as B.adolescentis, L.acidophilus, B.breve, L.fermentum, B.longum and S.thermophilus. Binds to bacterial membranes and causes membrane disintegration. Induces the secretion of the chemokine IL-8 by intestinal epithelial cells. Binds to B.antracis lef/lethal factor, a major virulence factor from B.anthracis, and neutralizes its enzymatic activity. This Pan troglodytes (Chimpanzee) protein is Defensin alpha 5 (DEFA5).